The primary structure comprises 464 residues: MAVYNYDVVVIGTGPAGEGAAMNAVKAGRKVAVVDDRPQVGGNCTHLGTIPSKALRHSVRQIMQYNNNPLFRQIGEPRWFSFADVLKSAEQVIAKQVSSRTGYYARNRIDTFFGTASFCDEHTIEVVHLNGMVETLVAKQFVIATGSRPYRPADVDFTHPRIYDSDTILSLGHTPRRLIIYGAGVIGCEYASIFSGLGVLVDLIDNRDQLLSFLDDEISDSLSYHLRNNNVLIRHNEEYERVEGLDNGVILHLKSGKKIKADAFLWSNGRTGNTDKLGLENIGLKANGRGQIQVDEHYRTEVSNIYAAGDVIGWPSLASAAYDQGRSAAGSITENDSWRFVDDVPTGIYTIPEISSVGKTERELTQAKVPYEVGKAFFKGMARAQIAVEKAGMLKILFHRETLEILGVHCFGYQASEIVHIGQAIMNQKGEANTLKYFINTTFNYPTMAEAYRVAAYDGLNRLF.

35-44 contacts FAD; that stretch reads DDRPQVGGNC.

Belongs to the class-I pyridine nucleotide-disulfide oxidoreductase family. FAD is required as a cofactor.

Its subcellular location is the cytoplasm. The catalysed reaction is NAD(+) + NADPH = NADH + NADP(+). In terms of biological role, conversion of NADPH, generated by peripheral catabolic pathways, to NADH, which can enter the respiratory chain for energy generation. The sequence is that of Soluble pyridine nucleotide transhydrogenase from Azotobacter vinelandii (strain DJ / ATCC BAA-1303).